Reading from the N-terminus, the 293-residue chain is 4-diphosphocytidyl-2-C-methyl-D-erythritol kinase (293 aa).

Lys16 is an active-site residue. Residue 99-109 (PMGAGLGGGSS) participates in ATP binding. Asp141 is an active-site residue.

This sequence belongs to the GHMP kinase family. IspE subfamily.

It carries out the reaction 4-CDP-2-C-methyl-D-erythritol + ATP = 4-CDP-2-C-methyl-D-erythritol 2-phosphate + ADP + H(+). It participates in isoprenoid biosynthesis; isopentenyl diphosphate biosynthesis via DXP pathway; isopentenyl diphosphate from 1-deoxy-D-xylulose 5-phosphate: step 3/6. Catalyzes the phosphorylation of the position 2 hydroxy group of 4-diphosphocytidyl-2C-methyl-D-erythritol. The polypeptide is 4-diphosphocytidyl-2-C-methyl-D-erythritol kinase (Burkholderia lata (strain ATCC 17760 / DSM 23089 / LMG 22485 / NCIMB 9086 / R18194 / 383)).